A 784-amino-acid chain; its full sequence is Protein DBF4 homolog B (784 aa).

The BRCT domain maps to 27-117 (CREITFAGKS…SRGKQLLKKV (91 aa)). The tract at residues 222-243 (TVKKKDPGDQEEEEGQRSQKPQ) is disordered. The DBF4-type zinc finger occupies 244–293 (ARKRKGYCECCEETFDTLSEHLVGEHHFRFVSNPLSYKMIDDLAAQLTCD). Cysteine 251, cysteine 254, histidine 264, and histidine 270 together coordinate Zn(2+). Disordered regions lie at residues 299-332 (FGSP…GNEG), 348-368 (HADC…AEEP), and 495-529 (TVGS…AQPA). Polar residues predominate over residues 498 to 507 (SQGDVTSHSA).

As to quaternary structure, forms a complex with cdc7. In terms of processing, phosphorylated. Stably phosphorylated throughout the cell cycle.

The protein resides in the nucleus. Functionally, regulatory subunit for cdc7 which activates its kinase activity thereby playing a central role in DNA replication and cell proliferation. Specifically required during the initiation of DNA replication in egg and during early embryonic development. The complex cdc7-dbf4b phosphorylates mcm2 and mcm4 subunits and is required for cdc45 loading. The sequence is that of Protein DBF4 homolog B (dbf4b) from Xenopus laevis (African clawed frog).